We begin with the raw amino-acid sequence, 296 residues long: Homoserine kinase (296 aa).

Position 84-94 (84-94 (PLARGLGSSSS)) interacts with ATP.

This sequence belongs to the GHMP kinase family. Homoserine kinase subfamily.

It is found in the cytoplasm. It catalyses the reaction L-homoserine + ATP = O-phospho-L-homoserine + ADP + H(+). Its pathway is amino-acid biosynthesis; L-threonine biosynthesis; L-threonine from L-aspartate: step 4/5. Functionally, catalyzes the ATP-dependent phosphorylation of L-homoserine to L-homoserine phosphate. This Lactococcus lactis subsp. cremoris (strain SK11) protein is Homoserine kinase.